The chain runs to 408 residues: Glutamate N-acetyltransferase (408 aa).

6 residues coordinate substrate: threonine 150, lysine 176, threonine 189, glutamate 271, asparagine 403, and threonine 408. Threonine 189 (nucleophile) is an active-site residue.

The protein belongs to the ArgJ family. As to quaternary structure, heterotetramer of two alpha and two beta chains.

Its subcellular location is the cytoplasm. It catalyses the reaction N(2)-acetyl-L-ornithine + L-glutamate = N-acetyl-L-glutamate + L-ornithine. It functions in the pathway amino-acid biosynthesis; L-arginine biosynthesis; L-ornithine and N-acetyl-L-glutamate from L-glutamate and N(2)-acetyl-L-ornithine (cyclic): step 1/1. Functionally, catalyzes the transfer of the acetyl group from N(2)-acetylornithine to glutamate, forming N-acetylglutamate and L-ornithine. This Methanococcus maripaludis (strain C6 / ATCC BAA-1332) protein is Glutamate N-acetyltransferase.